Consider the following 282-residue polypeptide: tRNA pseudouridine synthase A (282 aa).

The active-site Nucleophile is aspartate 51. A substrate-binding site is contributed by tyrosine 109.

The protein belongs to the tRNA pseudouridine synthase TruA family. As to quaternary structure, homodimer.

The catalysed reaction is uridine(38/39/40) in tRNA = pseudouridine(38/39/40) in tRNA. In terms of biological role, formation of pseudouridine at positions 38, 39 and 40 in the anticodon stem and loop of transfer RNAs. The chain is tRNA pseudouridine synthase A from Delftia acidovorans (strain DSM 14801 / SPH-1).